A 152-amino-acid chain; its full sequence is Probable flagellum biosynthesis repressor protein FlbT (152 aa).

Belongs to the FlbT family.

Its function is as follows. Has a post-transcriptional repressor function in flagellum biogenesis. Associates with the 5'-UTR of fljK mRNA and promotes its degradation. The polypeptide is Probable flagellum biosynthesis repressor protein FlbT (Brucella abortus (strain S19)).